The primary structure comprises 400 residues: Acetylornithine aminotransferase (400 aa).

Residues 102-103 (GA) and phenylalanine 135 contribute to the pyridoxal 5'-phosphate site. Arginine 138 serves as a coordination point for N(2)-acetyl-L-ornithine. Residue 220–223 (DEVQ) participates in pyridoxal 5'-phosphate binding. Position 249 is an N6-(pyridoxal phosphate)lysine (lysine 249). A N(2)-acetyl-L-ornithine-binding site is contributed by serine 276. A pyridoxal 5'-phosphate-binding site is contributed by threonine 277.

The protein belongs to the class-III pyridoxal-phosphate-dependent aminotransferase family. ArgD subfamily. As to quaternary structure, homodimer. Requires pyridoxal 5'-phosphate as cofactor.

Its subcellular location is the cytoplasm. The enzyme catalyses N(2)-acetyl-L-ornithine + 2-oxoglutarate = N-acetyl-L-glutamate 5-semialdehyde + L-glutamate. The protein operates within amino-acid biosynthesis; L-arginine biosynthesis; N(2)-acetyl-L-ornithine from L-glutamate: step 4/4. This chain is Acetylornithine aminotransferase, found in Gloeobacter violaceus (strain ATCC 29082 / PCC 7421).